The sequence spans 158 residues: MLSPKRVKFRKQQRGRMRGVATRGNTIAFGEFALQAQECGWITSRQIEASRRAMTRYVKRGGKIWIRIFPDKPVTMRPAETRMGSGKGNPEFWVAVIKPGRILFEMGGEEITEEIAREAMRLAQYKLPIKTKFIGLDDQEKVAGSDKPASVPAITAES.

Belongs to the universal ribosomal protein uL16 family. As to quaternary structure, part of the 50S ribosomal subunit.

Binds 23S rRNA and is also seen to make contacts with the A and possibly P site tRNAs. The chain is Large ribosomal subunit protein uL16 from Prochlorococcus marinus (strain MIT 9303).